A 214-amino-acid polypeptide reads, in one-letter code: Orotate phosphoribosyltransferase (214 aa).

Residue K26 coordinates 5-phospho-alpha-D-ribose 1-diphosphate. F34–F35 lines the orotate pocket. Residues Y72–K73, R99, K100, K103, H105, and D124–A132 contribute to the 5-phospho-alpha-D-ribose 1-diphosphate site. The orotate site is built by T128 and R156.

It belongs to the purine/pyrimidine phosphoribosyltransferase family. PyrE subfamily. Homodimer. Requires Mg(2+) as cofactor.

The enzyme catalyses orotidine 5'-phosphate + diphosphate = orotate + 5-phospho-alpha-D-ribose 1-diphosphate. Its pathway is pyrimidine metabolism; UMP biosynthesis via de novo pathway; UMP from orotate: step 1/2. In terms of biological role, catalyzes the transfer of a ribosyl phosphate group from 5-phosphoribose 1-diphosphate to orotate, leading to the formation of orotidine monophosphate (OMP). The sequence is that of Orotate phosphoribosyltransferase from Pseudoalteromonas translucida (strain TAC 125).